The primary structure comprises 426 residues: UPF0761 membrane protein Nmul_A0452 (426 aa).

The next 6 membrane-spanning stretches (helical) occupy residues 48–68 (LLSLVPMLAIGLSVIAAFPAF), 106–126 (LTAIGIAFLGVTALALMLTID), 145–165 (LLIYWSVLTIGPLLIGASLSL), 187–207 (LLRLSPLVLTSIAFSASYLIV), 217–237 (AIAGGVAAAIGFEIMKEGFAF), and 255–275 (IPIFLLWLYLSWLMVLLGAVI).

Belongs to the UPF0761 family.

It localises to the cell inner membrane. The polypeptide is UPF0761 membrane protein Nmul_A0452 (Nitrosospira multiformis (strain ATCC 25196 / NCIMB 11849 / C 71)).